Consider the following 151-residue polypeptide: Putative UPF0320 protein YFL063W (151 aa).

It belongs to the UPF0320 family.

The polypeptide is Putative UPF0320 protein YFL063W (Saccharomyces cerevisiae (strain ATCC 204508 / S288c) (Baker's yeast)).